The primary structure comprises 1033 residues: Probable beta-glucosidase E (1033 aa).

The disordered stretch occupies residues 1 to 71; sequence MAPPDSTHGG…RSGSYKLRPV (71 aa). Residues 1-161 are Cytoplasmic-facing; the sequence is MAPPDSTHGG…PVKYARIWWR (161 aa). Basic and acidic residues-rich tracts occupy residues 11–20 and 59–71; these read SFRDHLKTND and DLER…LRPV. Residues 162 to 182 traverse the membrane as a helical; Signal-anchor for type II membrane protein segment; the sequence is TLLAVVVTLVVVVWGFLSFAV. Residues 183 to 1033 are Extracellular-facing; sequence SHREEPTVWP…SRDLPLMGEY (851 aa). 3 N-linked (GlcNAc...) asparagine glycosylation sites follow: Asn-224, Asn-232, and Asn-418. Asp-446 is a catalytic residue. N-linked (GlcNAc...) asparagine glycosylation is found at Asn-489, Asn-528, Asn-593, Asn-909, Asn-918, and Asn-976.

This sequence belongs to the glycosyl hydrolase 3 family.

It localises to the cell membrane. The enzyme catalyses Hydrolysis of terminal, non-reducing beta-D-glucosyl residues with release of beta-D-glucose.. The protein operates within glycan metabolism; cellulose degradation. Beta-glucosidases are one of a number of cellulolytic enzymes involved in the degradation of cellulosic biomass. Catalyzes the last step releasing glucose from the inhibitory cellobiose. In Aspergillus fumigatus (strain CBS 144.89 / FGSC A1163 / CEA10) (Neosartorya fumigata), this protein is Probable beta-glucosidase E (bglE).